We begin with the raw amino-acid sequence, 863 residues long: Autotaxin (863 aa).

The first 27 residues, M1–G27, serve as a signal peptide directing secretion. The propeptide at F28–R35 is removed by furin. The N-linked (GlcNAc...) asparagine glycan is linked to N54. SMB domains follow at residues I55–A98 and R99–H143. 10 disulfides stabilise this stretch: C59–C76, C63–C94, C74–C87, C80–C86, C103–C120, C108–C138, C118–C131, C124–C130, C149–C195, and C157–C351. Residues R127–D129 carry the Cell attachment site motif. A phosphodiesterase region spans residues V145 to P502. 2 residues coordinate Zn(2+): D172 and T210. Catalysis depends on T210, which acts as the Nucleophile. Residues T210, N231, and D312 each coordinate 1-(9Z-octadecenoyl)-sn-glycero-3-phosphate. Residues T210, N231, and D312 each coordinate 1-hexadecanoyl-sn-glycero-3-phosphate. 1-tetradecanoyl-sn-glycerol 3-phosphate-binding residues include T210, N231, and D312. Zn(2+)-binding residues include D312, H316, D359, and H360. 5 cysteine pairs are disulfide-bonded: C367–C469, C414–C806, C567–C667, C569–C652, and C775–C785. Residue N411 is glycosylated (N-linked (GlcNAc...) asparagine). H475 contacts Zn(2+). H475 lines the 1-(9Z-octadecenoyl)-sn-glycero-3-phosphate pocket. H475 is a 1-hexadecanoyl-sn-glycero-3-phosphate binding site. Position 475 (H475) interacts with 1-tetradecanoyl-sn-glycerol 3-phosphate. N-linked (GlcNAc...) asparagine glycosylation occurs at N525. Positions L598 to I863 are nuclease-like domain. Positions 740, 742, 744, 746, and 748 each coordinate Ca(2+). An N-linked (GlcNAc...) asparagine glycan is attached at N807. Positions I830 to T851 are required for secretion.

This sequence belongs to the nucleotide pyrophosphatase/phosphodiesterase family. The cofactor is Zn(2+). It depends on Ca(2+) as a cofactor. In terms of processing, N-glycosylation, but not furin-cleavage, plays a critical role on secretion and on lysoPLD activity. The interdomain disulfide bond between Cys-414 and Cys-806 is essential for catalytic activity. In terms of tissue distribution, detected in blood plasma (at protein level). Predominantly expressed in brain, placenta, ovary, and small intestine. Expressed in a number of carcinomas such as hepatocellular and prostate carcinoma, neuroblastoma and non-small-cell lung cancer. Expressed in body fluids such as plasma, cerebral spinal fluid (CSF), saliva, follicular and amniotic fluids. Not detected in leukocytes. Isoform 1 is more highly expressed in peripheral tissues than in the central nervous system (CNS). Adipocytes only express isoform 1. Isoform 3 is more highly expressed in the brain than in peripheral tissues.

The protein localises to the secreted. The enzyme catalyses a 1-O-alkyl-sn-glycero-3-phosphoethanolamine + H2O = a 1-O-alkyl-sn-glycero-3-phosphate + ethanolamine + H(+). It carries out the reaction a 1-acyl-sn-glycero-3-phosphoethanolamine + H2O = a 1-acyl-sn-glycero-3-phosphate + ethanolamine + H(+). It catalyses the reaction 1-(9Z-octadecenoyl)-sn-glycero-3-phosphoethanolamine + H2O = 1-(9Z-octadecenoyl)-sn-glycero-3-phosphate + ethanolamine + H(+). The catalysed reaction is a 1-O-alkyl-sn-glycero-3-phosphocholine + H2O = a 1-O-alkyl-sn-glycero-3-phosphate + choline + H(+). The enzyme catalyses 1-O-(9Z-octadecenyl)-sn-glycero-3-phosphocholine + H2O = 1-O-(9Z-octadecenyl)-sn-glycero-3-phosphate + choline + H(+). It carries out the reaction 1-O-hexadecyl-sn-glycero-3-phosphocholine + H2O = 1-O-hexadecyl-sn-glycero-3-phosphate + choline + H(+). It catalyses the reaction a 1-O-(1Z-alkenyl)-sn-glycero-3-phosphocholine + H2O = a 1-O-(1Z-alkenyl)-sn-glycero-3-phosphate + choline + H(+). The catalysed reaction is a 1-acyl-sn-glycero-3-phosphocholine + H2O = a 1-acyl-sn-glycero-3-phosphate + choline + H(+). The enzyme catalyses 1-dodecanoyl-sn-glycero-3-phosphocholine + H2O = 1-dodecanoyl-sn-glycerol 3-phosphate + choline + H(+). It carries out the reaction 1-(9Z-octadecenoyl)-sn-glycero-3-phosphocholine + H2O = 1-(9Z-octadecenoyl)-sn-glycero-3-phosphate + choline + H(+). It catalyses the reaction 1-tetradecanoyl-sn-glycero-3-phosphocholine + H2O = 1-tetradecanoyl-sn-glycerol 3-phosphate + choline + H(+). The catalysed reaction is 1-decanoyl-sn-glycero-3-phosphocholine + H2O = 1-decanoyl-sn-glycero-3-phosphate + choline + H(+). The enzyme catalyses 1-octadecanoyl-sn-glycero-3-phosphocholine + H2O = 1-octadecanoyl-sn-glycero-3-phosphate + choline + H(+). It carries out the reaction 1-hexadecanoyl-sn-glycero-3-phosphocholine + H2O = 1-hexadecanoyl-sn-glycero-3-phosphate + choline + H(+). It catalyses the reaction 1-hexanoyl-sn-glycero-3-phosphocholine + H2O = 1-hexanoyl-sn-glycero-3-phosphate + choline + H(+). The catalysed reaction is 1-(9Z,12Z)-octadecadienoyl-sn-glycero-3-phosphocholine + H2O = 1-(9Z,12Z)-octadecadienoyl-sn-glycero-3-phosphate + choline + H(+). The enzyme catalyses sphing-4-enine-phosphocholine + H2O = sphing-4-enine 1-phosphate + choline + H(+). It carries out the reaction 1-(5Z,8Z,11Z,14Z-eicosatetraenoyl)-sn-glycero-3-phosphocholine + H2O = 1-(5Z,8Z,11Z,14Z-eicosatetraenoyl)-sn-glycero-3-phosphate + choline + H(+). It catalyses the reaction a 2-acyl-sn-glycero-3-phosphocholine + H2O = a 2-acyl-sn-glycerol 3-phosphate + choline + H(+). The catalysed reaction is a 1,2-diacyl-sn-glycero-3-phosphocholine + H2O = a 1,2-diacyl-sn-glycero-3-phosphate + choline + H(+). The enzyme catalyses 1,2-dioctanoyl-sn-glycero-3-phosphocholine + H2O = 1,2-dioctanoyl-sn-glycero-3-phosphate + choline + H(+). It carries out the reaction 1,2-didecanoyl-sn-glycero-3-phosphocholine + H2O = 1,2-didecanoyl-sn-glycero-3-phosphate + choline + H(+). It catalyses the reaction a 1-acyl-sn-glycero-3-phospho-L-serine + H2O = a 1-acyl-sn-glycero-3-phosphate + L-serine + H(+). The catalysed reaction is 1-(9Z-octadecenoyl)-sn-glycero-3-phospho-L-serine + H2O = 1-(9Z-octadecenoyl)-sn-glycero-3-phosphate + L-serine + H(+). The enzyme catalyses a 2-acyl-sn-glycero-3-phospho-L-serine + H2O = a 2-acyl-sn-glycerol 3-phosphate + L-serine + H(+). With respect to regulation, inhibited by lysophosphatidic acid (LPA) and sphingosine-1-phosphate (S1P). Inhibited by EDTA and EGTA. Functionally, secreted lysophospholipase D that hydrolyzes lysophospholipids to produce the signaling molecule lysophosphatidic acid (LPA) in extracellular fluids. Its major substrate is lysophosphatidylcholine. Can also act on sphingosylphosphorylcholine producing sphingosine-1-phosphate, a modulator of cell motility. Can hydrolyze, in vitro, bis-pNPP, to some extent pNP-TMP, and barely ATP. Involved in several motility-related processes such as angiogenesis and neurite outgrowth. Acts as an angiogenic factor by stimulating migration of smooth muscle cells and microtubule formation. Stimulates migration of melanoma cells, probably via a pertussis toxin-sensitive G protein. May have a role in induction of parturition. Possible involvement in cell proliferation and adipose tissue development. Required for LPA production in activated platelets, cleaves the sn-1 lysophospholipids to generate sn-1 lysophosphatidic acids containing predominantly 18:2 and 20:4 fatty acids. Shows a preference for the sn-1 to the sn-2 isomer of 1-O-alkyl-sn-glycero-3-phosphocholine (lyso-PAF). In Homo sapiens (Human), this protein is Autotaxin.